A 199-amino-acid chain; its full sequence is Recombination protein RecR (199 aa).

The segment at 58–73 adopts a C4-type zinc-finger fold; the sequence is CSRCFYFTEEDPCPLC. Positions 81 to 176 constitute a Toprim domain; it reads QLICVVEEPQ…KVTRLAHGIP (96 aa).

The protein belongs to the RecR family.

Functionally, may play a role in DNA repair. It seems to be involved in an RecBC-independent recombinational process of DNA repair. It may act with RecF and RecO. In Syntrophotalea carbinolica (strain DSM 2380 / NBRC 103641 / GraBd1) (Pelobacter carbinolicus), this protein is Recombination protein RecR.